The chain runs to 505 residues: DDB1- and CUL4-associated factor 17 (505 aa).

Transmembrane regions (helical) follow at residues V186 to I206 and G222 to I242.

Interacts with DDB1, CUL4A and CUL4B.

It localises to the membrane. The protein resides in the nucleus. It is found in the nucleolus. It functions in the pathway protein modification; protein ubiquitination. Functionally, may function as a substrate receptor for CUL4-DDB1 E3 ubiquitin-protein ligase complex. This is DDB1- and CUL4-associated factor 17 (Dcaf17) from Rattus norvegicus (Rat).